Reading from the N-terminus, the 524-residue chain is 2-isopropylmalate synthase (524 aa).

The region spanning 12–274 (VIIFDTTLRD…WNRIESKMLT (263 aa)) is the Pyruvate carboxyltransferase domain. Positions 21, 209, 211, and 245 each coordinate Mn(2+). Positions 398 to 524 (RLKSLTVIAG…QDAPAVAVAG (127 aa)) are regulatory domain.

The protein belongs to the alpha-IPM synthase/homocitrate synthase family. LeuA type 1 subfamily. As to quaternary structure, homodimer. It depends on Mn(2+) as a cofactor.

The protein resides in the cytoplasm. The enzyme catalyses 3-methyl-2-oxobutanoate + acetyl-CoA + H2O = (2S)-2-isopropylmalate + CoA + H(+). It functions in the pathway amino-acid biosynthesis; L-leucine biosynthesis; L-leucine from 3-methyl-2-oxobutanoate: step 1/4. Catalyzes the condensation of the acetyl group of acetyl-CoA with 3-methyl-2-oxobutanoate (2-ketoisovalerate) to form 3-carboxy-3-hydroxy-4-methylpentanoate (2-isopropylmalate). The protein is 2-isopropylmalate synthase of Rhodopseudomonas palustris (strain BisB5).